A 230-amino-acid polypeptide reads, in one-letter code: Ubiquitin carboxyl-terminal hydrolase isozyme L3 (230 aa).

The 225-residue stretch at 5–229 (RWLPLEANPE…LRFNAIALSA (225 aa)) folds into the UCH catalytic domain. Residues 8 to 13 (PLEANP) form an interaction with ubiquitin region. The active-site Nucleophile is the C95. S130 carries the phosphoserine modification. The tract at residues 152–159 (AHEGQTEA) is interaction with ubiquitin. Crossover loop which restricts access of large ubiquitin adducts to the active site. The Proton donor role is filled by H169. The segment at 219–224 (ELRFNA) is interaction with ubiquitin.

The protein belongs to the peptidase C12 family. As to quaternary structure, preferentially binds diubiquitin; the interaction does not hydrolyze diubiquitin but, in vitro, inhibits the hydrolyzing activity on other substrates. Ubiquitously expressed, with highest levels in brain, liver, heart, thymus, kidney and testis. Highly expressed in the cauda epididymidis, in meiotic pachytene spermatocytes and post-meiotic spematids. In the retina, enriched in the photoreceptor inner segment.

The protein localises to the cytoplasm. The catalysed reaction is Thiol-dependent hydrolysis of ester, thioester, amide, peptide and isopeptide bonds formed by the C-terminal Gly of ubiquitin (a 76-residue protein attached to proteins as an intracellular targeting signal).. With respect to regulation, inhibited by monoubiquitin and diubiquitin. In terms of biological role, deubiquitinating enzyme (DUB) that controls levels of cellular ubiquitin through processing of ubiquitin precursors and ubiquitinated proteins. Thiol protease that recognizes and hydrolyzes a peptide bond at the C-terminal glycine of either ubiquitin or NEDD8. Has a 10-fold preference for Arg and Lys at position P3'', and exhibits a preference towards 'Lys-48'-linked ubiquitin chains. Deubiquitinates ENAC in apical compartments, thereby regulating apical membrane recycling. Indirectly increases the phosphorylation of IGFIR, AKT and FOXO1 and promotes insulin-signaling and insulin-induced adipogenesis. Required for stress-response retinal, skeletal muscle and germ cell maintenance. May be involved in working memory. Can hydrolyze UBB(+1), a mutated form of ubiquitin which is not effectively degraded by the proteasome. In Mus musculus (Mouse), this protein is Ubiquitin carboxyl-terminal hydrolase isozyme L3 (Uchl3).